The following is a 319-amino-acid chain: tRNA dimethylallyltransferase (319 aa).

Residue 15–22 (GPTASGKS) coordinates ATP. A substrate-binding site is contributed by 17–22 (TASGKS). Interaction with substrate tRNA stretches follow at residues 40-43 (DSRQ) and 164-168 (QRLVR).

This sequence belongs to the IPP transferase family. In terms of assembly, monomer. Requires Mg(2+) as cofactor.

It carries out the reaction adenosine(37) in tRNA + dimethylallyl diphosphate = N(6)-dimethylallyladenosine(37) in tRNA + diphosphate. In terms of biological role, catalyzes the transfer of a dimethylallyl group onto the adenine at position 37 in tRNAs that read codons beginning with uridine, leading to the formation of N6-(dimethylallyl)adenosine (i(6)A). This Chlorobium phaeobacteroides (strain DSM 266 / SMG 266 / 2430) protein is tRNA dimethylallyltransferase.